The following is a 348-amino-acid chain: Selenide, water dikinase (348 aa).

The active site involves Cys-17. ATP contacts are provided by residues Lys-20 and 48–50; that span reads TRD. Asp-51 is a Mg(2+) binding site. ATP contacts are provided by residues Asp-68, Asp-91, and 139 to 141; that span reads GHS. Residue Asp-91 coordinates Mg(2+). Asp-227 lines the Mg(2+) pocket.

This sequence belongs to the selenophosphate synthase 1 family. Class I subfamily. In terms of assembly, homodimer. The cofactor is Mg(2+).

The catalysed reaction is hydrogenselenide + ATP + H2O = selenophosphate + AMP + phosphate + 2 H(+). Its function is as follows. Synthesizes selenophosphate from selenide and ATP. This is Selenide, water dikinase from Yersinia pestis.